The following is a 74-amino-acid chain: Cecropin-P2 (74 aa).

Residues 1-13 form the signal peptide; it reads MIFIYLLVQTAES. Positions 45–74 are cleaved as a propeptide — removed in mature form; the sequence is RRRFVVQQDTISPRLEVDERFLPNSVQEQI.

The protein belongs to the cecropin family. As to expression, expressed in the body wall, intestine, uterus and ovary.

The protein localises to the secreted. Its function is as follows. Has antibacterial activity against several Gram-positive and Gram-negative bacteria. Is weakly active against yeasts. Acts by a nonpore mechanism. The sequence is that of Cecropin-P2 (ASCEC-2) from Ascaris suum (Pig roundworm).